Consider the following 1227-residue polypeptide: ATP-dependent helicase/nuclease subunit A (1227 aa).

One can recognise a UvrD-like helicase ATP-binding domain in the interval 3–477 (VKYTPDQARA…IIFAENFRSS (475 aa)). 24 to 31 (ASAGSGKT) lines the ATP pocket. The UvrD-like helicase C-terminal domain occupies 505 to 788 (GQLKFAAGYD…KLMTIHASKG (284 aa)).

This sequence belongs to the helicase family. AddA subfamily. In terms of assembly, heterodimer of AddA and AddB/RexB. The cofactor is Mg(2+).

The catalysed reaction is Couples ATP hydrolysis with the unwinding of duplex DNA by translocating in the 3'-5' direction.. The enzyme catalyses ATP + H2O = ADP + phosphate + H(+). The heterodimer acts as both an ATP-dependent DNA helicase and an ATP-dependent, dual-direction single-stranded exonuclease. Recognizes the chi site generating a DNA molecule suitable for the initiation of homologous recombination. The AddA nuclease domain is required for chi fragment generation; this subunit has the helicase and 3' -&gt; 5' nuclease activities. The protein is ATP-dependent helicase/nuclease subunit A of Lactobacillus delbrueckii subsp. bulgaricus (strain ATCC 11842 / DSM 20081 / BCRC 10696 / JCM 1002 / NBRC 13953 / NCIMB 11778 / NCTC 12712 / WDCM 00102 / Lb 14).